Here is a 229-residue protein sequence, read N- to C-terminus: Enolase-phosphatase E1 (229 aa).

Residues 208–218 (DTQSTHRQVSS) show a composition bias toward polar residues. Residues 208 to 229 (DTQSTHRQVSSFDDIHPEQIPT) are disordered. Residues 220 to 229 (DDIHPEQIPT) are compositionally biased toward basic and acidic residues.

This sequence belongs to the HAD-like hydrolase superfamily. MasA/MtnC family. Monomer. Mg(2+) is required as a cofactor.

It catalyses the reaction 5-methylsulfanyl-2,3-dioxopentyl phosphate + H2O = 1,2-dihydroxy-5-(methylsulfanyl)pent-1-en-3-one + phosphate. It participates in amino-acid biosynthesis; L-methionine biosynthesis via salvage pathway; L-methionine from S-methyl-5-thio-alpha-D-ribose 1-phosphate: step 3/6. The protein operates within amino-acid biosynthesis; L-methionine biosynthesis via salvage pathway; L-methionine from S-methyl-5-thio-alpha-D-ribose 1-phosphate: step 4/6. In terms of biological role, bifunctional enzyme that catalyzes the enolization of 2,3-diketo-5-methylthiopentyl-1-phosphate (DK-MTP-1-P) into the intermediate 2-hydroxy-3-keto-5-methylthiopentenyl-1-phosphate (HK-MTPenyl-1-P), which is then dephosphorylated to form the acireductone 1,2-dihydroxy-3-keto-5-methylthiopentene (DHK-MTPene). This is Enolase-phosphatase E1 from Cronobacter sakazakii (strain ATCC BAA-894) (Enterobacter sakazakii).